A 742-amino-acid polypeptide reads, in one-letter code: Zinc finger MYND domain-containing protein 15 (742 aa).

The disordered stretch occupies residues 109–199 (LEDGEEGEEE…QKRKGQRSEA (91 aa)). Positions 110–127 (EDGEEGEEEEEEDEEEEK) are enriched in acidic residues. Positions 151 to 161 (SRESPQETNPP) are enriched in polar residues. The span at 166–189 (EAAREAGGGKDGCREDRVENETRP) shows a compositional bias: basic and acidic residues. Zn(2+)-binding residues include Cys-313, Cys-316, Cys-328, Cys-331, Cys-337, Cys-341, His-355, and Cys-359. An MYND-type zinc finger spans residues 313 to 359 (CHVCHRHSFEAKLTPCPQCSAVLYCGEACLRADWQRCPDDVSHRFWC). 2 disordered regions span residues 565–590 (EVSVRPGSGISARPSSGTKEKGGRRD) and 701–742 (QGSG…RRRK). Over residues 708 to 724 (APGPPPPSPTPSAPPAP) the composition is skewed to pro residues. The segment covering 725–742 (TRRRRGEKKPGRGARRRK) has biased composition (basic residues).

As to quaternary structure, interacts with HDAC1, HDAC3, HDAC6 and, to a lesser extent, with HDAC7.

Its subcellular location is the nucleus. The protein localises to the cytoplasm. Acts as a transcriptional repressor through interaction with histone deacetylases (HDACs). May be important for spermiogenesis. This Homo sapiens (Human) protein is Zinc finger MYND domain-containing protein 15 (ZMYND15).